We begin with the raw amino-acid sequence, 98 residues long: Transcription elongation factor A protein-like 7 (98 aa).

The span at methionine 1–proline 24 shows a compositional bias: basic and acidic residues. The tract at residues methionine 1–glutamine 31 is disordered. The stretch at glycine 59–asparagine 89 forms a coiled coil.

This sequence belongs to the TFS-II family. TFA subfamily.

It is found in the nucleus. Plays a role in the negative regulation of NF-kappa-B signaling at the basal level by modulating transcriptional activity of NF-kappa-B on its target gene promoters. Associates with cyclin D1 promoter containing Myc E-box sequence and transcriptionally represses cyclin D1 expression. Regulates telomerase reverse transcriptase expression and telomerase activity in both ALT (alternative lengthening of telomeres)and telomerase-positive cell lines. The polypeptide is Transcription elongation factor A protein-like 7 (Tceal7) (Rattus norvegicus (Rat)).